The sequence spans 984 residues: Translation initiation factor IF-2 (984 aa).

Disordered regions lie at residues 92 to 267 (KKRT…ERRR) and 280 to 392 (MNAP…EEHV). Residues 104–123 (PATPEVQPVAEAPAAAPAAP) are compositionally biased toward low complexity. Positions 124–177 (RIDEAELARREEEARRQAELIRRQEEELAEKRRLREEAEAREREQAEKAERAEQ) are enriched in basic and acidic residues. Residues 193 to 235 (DAAAAAPAKEAAKPAAAPVAAAAAAAEQQAADTKLAAQTAATQ) show a composition bias toward low complexity. 2 stretches are compositionally biased toward basic and acidic residues: residues 236–267 (AKED…ERRR) and 291–302 (KAPEKPQPEKAA). Residues 310–335 (PAAPAARPGAPAAPGAAAAPGAAGAG) are compositionally biased toward low complexity. The span at 351 to 361 (PAKKKEIKTRG) shows a compositional bias: basic and acidic residues. A compositionally biased stretch (gly residues) spans 363–375 (ASGGVGRGNWRGG). Positions 381–392 (GSNDRGGHEEHV) are enriched in basic and acidic residues. A tr-type G domain is found at 484 to 653 (PRAPVVTVMG…LLQAEVLELK (170 aa)). Residues 493–500 (GHVDHGKT) are G1. Position 493 to 500 (493 to 500 (GHVDHGKT)) interacts with GTP. Residues 518-522 (GITQH) form a G2 region. Residues 539-542 (DTPG) are G3. GTP is bound by residues 539–543 (DTPGH) and 593–596 (NKID). Residues 593 to 596 (NKID) are G4. The interval 629-631 (SAK) is G5.

This sequence belongs to the TRAFAC class translation factor GTPase superfamily. Classic translation factor GTPase family. IF-2 subfamily.

It is found in the cytoplasm. Its function is as follows. One of the essential components for the initiation of protein synthesis. Protects formylmethionyl-tRNA from spontaneous hydrolysis and promotes its binding to the 30S ribosomal subunits. Also involved in the hydrolysis of GTP during the formation of the 70S ribosomal complex. This is Translation initiation factor IF-2 from Variovorax paradoxus (strain S110).